The sequence spans 607 residues: Arginine decarboxylase (607 aa).

The residue at position 104 (K104) is an N6-(pyridoxal phosphate)lysine. Substrate is bound at residue L290–Y300.

It belongs to the Orn/Lys/Arg decarboxylase class-II family. SpeA subfamily. Pyridoxal 5'-phosphate is required as a cofactor. It depends on Mg(2+) as a cofactor.

The catalysed reaction is L-arginine + H(+) = agmatine + CO2. The protein operates within amine and polyamine biosynthesis; agmatine biosynthesis; agmatine from L-arginine: step 1/1. The polypeptide is Arginine decarboxylase (SPE1) (Avena sativa (Oat)).